The primary structure comprises 245 residues: Ribosomal RNA small subunit methyltransferase G (245 aa).

Residues Gly85, Phe90, 108–110, 136–137, and Arg155 contribute to the S-adenosyl-L-methionine site; these read DST and AE.

The protein belongs to the methyltransferase superfamily. RNA methyltransferase RsmG family.

Its subcellular location is the cytoplasm. Functionally, specifically methylates the N7 position of a guanine in 16S rRNA. This is Ribosomal RNA small subunit methyltransferase G from Nostoc sp. (strain PCC 7120 / SAG 25.82 / UTEX 2576).